The sequence spans 416 residues: Serine hydroxymethyltransferase (416 aa).

(6S)-5,6,7,8-tetrahydrofolate-binding positions include Leu-118 and 122-124 (GHL). Lys-226 carries the post-translational modification N6-(pyridoxal phosphate)lysine. Residue Glu-242 participates in (6S)-5,6,7,8-tetrahydrofolate binding.

The protein belongs to the SHMT family. As to quaternary structure, homodimer. It depends on pyridoxal 5'-phosphate as a cofactor.

The protein resides in the cytoplasm. It catalyses the reaction (6R)-5,10-methylene-5,6,7,8-tetrahydrofolate + glycine + H2O = (6S)-5,6,7,8-tetrahydrofolate + L-serine. The protein operates within one-carbon metabolism; tetrahydrofolate interconversion. It functions in the pathway amino-acid biosynthesis; glycine biosynthesis; glycine from L-serine: step 1/1. Its function is as follows. Catalyzes the reversible interconversion of serine and glycine with tetrahydrofolate (THF) serving as the one-carbon carrier. This reaction serves as the major source of one-carbon groups required for the biosynthesis of purines, thymidylate, methionine, and other important biomolecules. Also exhibits THF-independent aldolase activity toward beta-hydroxyamino acids, producing glycine and aldehydes, via a retro-aldol mechanism. In Helicobacter pylori (strain J99 / ATCC 700824) (Campylobacter pylori J99), this protein is Serine hydroxymethyltransferase.